We begin with the raw amino-acid sequence, 241 residues long: MSMLFYTLITAFLIGTQAEPHSESNVPAGHTIPQAHWTKLQHSLDTALRRARSAPAAAIAARVAGQTRNITVDPRLFKKRRLRSPRVLFSTQPPPEAADTQDLDFEVGGAAPFNRTHRSKRSSSHPIFHRGEFSVCDSVSVWVGDKTTATDIKGKEVMVLGEVNINNSVFKQYFFETKCRDPNPVDSGCRGIDSKHWNSYCTTTHTFVKALTMDGKQAAWRFIRIDTACVCVLSRKAVRRA.

An N-terminal signal peptide occupies residues 1 to 18 (MSMLFYTLITAFLIGTQA). A propeptide spanning residues 19 to 121 (EPHSESNVPA…PFNRTHRSKR (103 aa)) is cleaved from the precursor. N69, N114, and N166 each carry an N-linked (GlcNAc...) asparagine glycan. Intrachain disulfides connect C136-C201, C179-C229, and C189-C231. Residues Y173 and K209 each contribute to the a 1-acyl-sn-glycero-3-phospho-(1D-myo-inositol) site. K209 provides a ligand contact to a 1-acyl-sn-glycero-3-phospho-L-serine.

Belongs to the NGF-beta family. In terms of assembly, homodimer. The homodimer interacts with a single NTRK1 chain. The homodimer interacts with a single NGFR chain. The NGF dimer interacts with a single SORCS2 chain (via extracellular domain). The NGF precursor (proNGF) binds to a receptor complex formed by SORT1 and NGFR, which leads to NGF endocytosis. Both mature NGF and the immature NGF precursor (proNGF) interact with SORCS2 and with the heterodimer formed by SORCS2 and NGFR (via extracellular domains). The NGF precursor (proNGF) has much higher affinity for SORCS2 than mature NGF. The NGF precursor (proNGF) has much higher affinity for SORT1 than mature NGF. Interacts with ADAM10 in a divalent cation-dependent manner. Interacts with SORCS3.

The protein resides in the secreted. Its subcellular location is the endosome lumen. In terms of biological role, nerve growth factor is important for the development and maintenance of the sympathetic and sensory nervous systems. Extracellular ligand for the NTRK1 and NGFR receptors, activates cellular signaling cascades to regulate neuronal proliferation, differentiation and survival. The immature NGF precursor (proNGF) functions as a ligand for the heterodimeric receptor formed by SORCS2 and NGFR, and activates cellular signaling cascades that lead to inactivation of RAC1 and/or RAC2, reorganization of the actin cytoskeleton and neuronal growth cone collapse. In contrast to mature NGF, the precursor form (proNGF) promotes neuronal apoptosis (in vitro). Inhibits metalloproteinase-dependent proteolysis of platelet glycoprotein VI. Binds lysophosphatidylinositol and lysophosphatidylserine between the two chains of the homodimer. The lipid-bound form promotes histamine relase from mast cells, contrary to the lipid-free form. This chain is Beta-nerve growth factor (NGF), found in Pan troglodytes (Chimpanzee).